The sequence spans 648 residues: MINITFPDGAVREFESGVTTFEIAQSISNSLAKKALAGKFNGKLIDTTRVITEDGSIEIVTPDHEDALPILRHSAAHLFAQAARRLFPDIHLGVGPAIEDGFYYDTDNQAGQISNEDLPRIEEEMKKIVKENFPSIREEVTKDEAREIFKNDPYKLELIEEHSEDDGGLTIYRQGEYVDLCRGPHVPSTGRIQIFHLLNVAGAYWRGNSDNAMMQRIYGTAWFDKKDLKAYLKRLEEAKERDHRKLGKELDLFMISQEVGQGLPFWLPNGATIRRELERYIVDKEVAAGYQHVYTPPIASVELYKTSGHWDHYREDMFPPMDMGDGEEFVLRPMNCPHHIEVYKHHVHSYRELPIRIAEIGMMHRYEKSGALTGLQRVREMSLNDGHTFVAPEQIEEEFKKILQLIIDVYEDFNLTDYRFRLSYRDPADKHKYFDNDEMWENAQRMLKAAVDDMGVEYYEAEGEAAFYGPKLDIQVKTALGKEETLSTIQLDFLLPERFDLHYIGADGEEHRPVMIHRGVISTMERFTAILIENYKGAFPTWLAPHQVTLIPVSNEKHVDYAWEVAKKLRDRGVRAEVDERNEKMQFKIRASQTQKIPYQLIVGDKEMKDGTVNVRRYGQKQTHTETVSEFVENILADIARKSRPDAE.

A TGS domain is found at 1 to 61 (MINITFPDGA…TEDGSIEIVT (61 aa)). The segment at 242–540 (DHRKLGKELD…LIENYKGAFP (299 aa)) is catalytic. Zn(2+) is bound by residues Cys-336, His-387, and His-517.

Belongs to the class-II aminoacyl-tRNA synthetase family. As to quaternary structure, homodimer. Requires Zn(2+) as cofactor.

Its subcellular location is the cytoplasm. It carries out the reaction tRNA(Thr) + L-threonine + ATP = L-threonyl-tRNA(Thr) + AMP + diphosphate + H(+). Catalyzes the attachment of threonine to tRNA(Thr) in a two-step reaction: L-threonine is first activated by ATP to form Thr-AMP and then transferred to the acceptor end of tRNA(Thr). Also edits incorrectly charged L-seryl-tRNA(Thr). This is Threonine--tRNA ligase from Streptococcus thermophilus (strain ATCC BAA-250 / LMG 18311).